A 482-amino-acid polypeptide reads, in one-letter code: tRNA(Ile)-lysidine synthase (482 aa).

28-33 (SGGPDS) lines the ATP pocket.

The protein belongs to the tRNA(Ile)-lysidine synthase family.

Its subcellular location is the cytoplasm. The catalysed reaction is cytidine(34) in tRNA(Ile2) + L-lysine + ATP = lysidine(34) in tRNA(Ile2) + AMP + diphosphate + H(+). Functionally, ligates lysine onto the cytidine present at position 34 of the AUA codon-specific tRNA(Ile) that contains the anticodon CAU, in an ATP-dependent manner. Cytidine is converted to lysidine, thus changing the amino acid specificity of the tRNA from methionine to isoleucine. The protein is tRNA(Ile)-lysidine synthase of Symbiobacterium thermophilum (strain DSM 24528 / JCM 14929 / IAM 14863 / T).